Reading from the N-terminus, the 78-residue chain is Large ribosomal subunit protein bL28 (78 aa).

It belongs to the bacterial ribosomal protein bL28 family.

The polypeptide is Large ribosomal subunit protein bL28 (Ruthia magnifica subsp. Calyptogena magnifica).